The following is a 907-amino-acid chain: Translation initiation factor IF-2 (907 aa).

The segment at D26–D317 is disordered. 2 stretches are compositionally biased toward basic and acidic residues: residues G28–K44 and S101–Y248. The segment covering K299–K308 has biased composition (basic residues). In terms of domain architecture, tr-type G spans P406–T575. Residues G415–T422 are G1. Residue G415–T422 participates in GTP binding. The tract at residues G440 to H444 is G2. Positions D461–G464 are G3. GTP is bound by residues D461 to H465 and N515 to D518. Residues N515–D518 are G4. The tract at residues S551–K553 is G5.

It belongs to the TRAFAC class translation factor GTPase superfamily. Classic translation factor GTPase family. IF-2 subfamily.

The protein localises to the cytoplasm. Functionally, one of the essential components for the initiation of protein synthesis. Protects formylmethionyl-tRNA from spontaneous hydrolysis and promotes its binding to the 30S ribosomal subunits. Also involved in the hydrolysis of GTP during the formation of the 70S ribosomal complex. The protein is Translation initiation factor IF-2 of Vibrio vulnificus (strain YJ016).